Consider the following 83-residue polypeptide: Aminoacyl carrier protein (83 aa).

The Carrier domain maps to 1–80 (MNATIREILA…DTVKLILDGK (80 aa)). Ser35 carries the O-(pantetheine 4'-phosphoryl)serine modification.

In terms of processing, 4'-phosphopantetheine is transferred from CoA to a specific serine of the apo-form of this carrier protein.

Functionally, aminoacyl carrier protein. Can be charged with L-alanine, L-glycine or L-serine, via the formation of a thioester bond between the amino acid and the 4'-phosphopantetheinyl prosthetic group, catalyzed by the Atu2573 ligase. This is Aminoacyl carrier protein from Agrobacterium fabrum (strain C58 / ATCC 33970) (Agrobacterium tumefaciens (strain C58)).